A 451-amino-acid polypeptide reads, in one-letter code: D-inositol 3-phosphate glycosyltransferase (451 aa).

His-37 serves as a coordination point for 1D-myo-inositol 3-phosphate. UDP-N-acetyl-alpha-D-glucosamine contacts are provided by residues 43–44 (QP) and Gly-51. Residues 48-53 (DAGGMN), Lys-106, Tyr-138, Thr-162, and Arg-182 each bind 1D-myo-inositol 3-phosphate. Arg-259, Lys-264, and Arg-323 together coordinate UDP-N-acetyl-alpha-D-glucosamine. Mg(2+) is bound by residues Tyr-332, Arg-333, and Ala-335. Positions 345 and 353 each coordinate UDP-N-acetyl-alpha-D-glucosamine. A Mg(2+)-binding site is contributed by Thr-359.

It belongs to the glycosyltransferase group 1 family. MshA subfamily. As to quaternary structure, homodimer.

It catalyses the reaction 1D-myo-inositol 3-phosphate + UDP-N-acetyl-alpha-D-glucosamine = 1D-myo-inositol 2-acetamido-2-deoxy-alpha-D-glucopyranoside 3-phosphate + UDP + H(+). Catalyzes the transfer of a N-acetyl-glucosamine moiety to 1D-myo-inositol 3-phosphate to produce 1D-myo-inositol 2-acetamido-2-deoxy-glucopyranoside 3-phosphate in the mycothiol biosynthesis pathway. This is D-inositol 3-phosphate glycosyltransferase from Corynebacterium kroppenstedtii (strain DSM 44385 / JCM 11950 / CIP 105744 / CCUG 35717).